The chain runs to 81 residues: UPF0349 protein SE_0633 (81 aa).

It belongs to the UPF0349 family.

In Staphylococcus epidermidis (strain ATCC 12228 / FDA PCI 1200), this protein is UPF0349 protein SE_0633.